The chain runs to 177 residues: Deoxyuridine 5'-triphosphate nucleotidohydrolase (177 aa).

Substrate-binding positions include 83–85, N96, 100–102, and K110; these read RSG and TID. The span at 150–163 shows a compositional bias: polar residues; that stretch reads DLTSSQTDLSNQPN. Positions 150–177 are disordered; the sequence is DLTSSQTDLSNQPNTGRGTGGFGSTGQK. The span at 166–177 shows a compositional bias: gly residues; the sequence is RGTGGFGSTGQK.

The protein belongs to the dUTPase family. The cofactor is Mg(2+).

It catalyses the reaction dUTP + H2O = dUMP + diphosphate + H(+). It functions in the pathway pyrimidine metabolism; dUMP biosynthesis; dUMP from dCTP (dUTP route): step 2/2. Its function is as follows. This enzyme is involved in nucleotide metabolism: it produces dUMP, the immediate precursor of thymidine nucleotides and it decreases the intracellular concentration of dUTP so that uracil cannot be incorporated into DNA. This Bartonella bacilliformis (strain ATCC 35685 / KC583 / Herrer 020/F12,63) protein is Deoxyuridine 5'-triphosphate nucleotidohydrolase.